A 249-amino-acid polypeptide reads, in one-letter code: General transcription factor IIF subunit 2 (249 aa).

An N-acetylalanine modification is found at Ala2. An N6-acetyllysine mark is found at Lys22, Lys33, and Lys137. Ser142 carries the phosphoserine modification. DNA is bound by residues Gly227 and His229. At Ser248 the chain carries Phosphoserine.

This sequence belongs to the TFIIF beta subunit family. As to quaternary structure, heterodimer of an alpha and a beta subunit. Interacts with HTATSF1 and GPBP1. Interacts with URI1. Interacts with GTF2B (via N-terminus); this interaction is inhibited in presence of GTF2F1. Part of TBP-based Pol II pre-initiation complex (PIC), in which Pol II core assembles with general transcription factors and other specific initiation factors including GTF2E1, GTF2E2, GTF2F1, GTF2F2, TCEA1, ERCC2, ERCC3, GTF2H2, GTF2H3, GTF2H4, GTF2H5, GTF2A1, GTF2A2, GTF2B and TBP; this large multi-subunit PIC complex mediates DNA unwinding and targets Pol II core to the transcription start site where the first phosphodiester bond forms.

The protein localises to the nucleus. Functionally, TFIIF is a general transcription initiation factor that binds to RNA polymerase II and helps to recruit it to the initiation complex in collaboration with TFIIB. It promotes transcription elongation. The sequence is that of General transcription factor IIF subunit 2 (Gtf2f2) from Rattus norvegicus (Rat).